The sequence spans 49 residues: Large ribosomal subunit protein bL33 (49 aa).

Belongs to the bacterial ribosomal protein bL33 family.

In Clostridium acetobutylicum (strain ATCC 824 / DSM 792 / JCM 1419 / IAM 19013 / LMG 5710 / NBRC 13948 / NRRL B-527 / VKM B-1787 / 2291 / W), this protein is Large ribosomal subunit protein bL33.